The chain runs to 875 residues: Alanine--tRNA ligase (875 aa).

His564, His568, Cys666, and His670 together coordinate Zn(2+).

It belongs to the class-II aminoacyl-tRNA synthetase family. The cofactor is Zn(2+).

Its subcellular location is the cytoplasm. It carries out the reaction tRNA(Ala) + L-alanine + ATP = L-alanyl-tRNA(Ala) + AMP + diphosphate. Catalyzes the attachment of alanine to tRNA(Ala) in a two-step reaction: alanine is first activated by ATP to form Ala-AMP and then transferred to the acceptor end of tRNA(Ala). Also edits incorrectly charged Ser-tRNA(Ala) and Gly-tRNA(Ala) via its editing domain. In Mannheimia succiniciproducens (strain KCTC 0769BP / MBEL55E), this protein is Alanine--tRNA ligase.